Here is a 73-residue protein sequence, read N- to C-terminus: Kappa-scoloptoxin(03)-Ssm1c (73 aa).

The first 23 residues, M1 to S23, serve as a signal peptide directing secretion. Disulfide bonds link C32–C58, C41–C57, and C44–C67.

It belongs to the scoloptoxin family. In terms of tissue distribution, expressed by the venom gland.

It is found in the secreted. Inhibits voltage-gated potassium channels. The polypeptide is Kappa-scoloptoxin(03)-Ssm1c (Scolopendra mutilans (Chinese red-headed centipede)).